A 378-amino-acid polypeptide reads, in one-letter code: Dual-specificity RNA methyltransferase RlmN 2 (378 aa).

The active-site Proton acceptor is the glutamate 113. The Radical SAM core domain maps to 119–355 (TEDRRTLCVS…AAYIRRNRGR (237 aa)). A disulfide bridge connects residues cysteine 126 and cysteine 361. [4Fe-4S] cluster contacts are provided by cysteine 133, cysteine 137, and cysteine 140. S-adenosyl-L-methionine contacts are provided by residues 188–189 (GE), serine 220, 242–244 (SLN), and asparagine 318. Catalysis depends on cysteine 361, which acts as the S-methylcysteine intermediate.

The protein belongs to the radical SAM superfamily. RlmN family. It depends on [4Fe-4S] cluster as a cofactor.

It is found in the cytoplasm. It catalyses the reaction adenosine(2503) in 23S rRNA + 2 reduced [2Fe-2S]-[ferredoxin] + 2 S-adenosyl-L-methionine = 2-methyladenosine(2503) in 23S rRNA + 5'-deoxyadenosine + L-methionine + 2 oxidized [2Fe-2S]-[ferredoxin] + S-adenosyl-L-homocysteine. It carries out the reaction adenosine(37) in tRNA + 2 reduced [2Fe-2S]-[ferredoxin] + 2 S-adenosyl-L-methionine = 2-methyladenosine(37) in tRNA + 5'-deoxyadenosine + L-methionine + 2 oxidized [2Fe-2S]-[ferredoxin] + S-adenosyl-L-homocysteine. Functionally, specifically methylates position 2 of adenine 2503 in 23S rRNA and position 2 of adenine 37 in tRNAs. m2A2503 modification seems to play a crucial role in the proofreading step occurring at the peptidyl transferase center and thus would serve to optimize ribosomal fidelity. The polypeptide is Dual-specificity RNA methyltransferase RlmN 2 (Myxococcus xanthus (strain DK1622)).